Reading from the N-terminus, the 322-residue chain is tRNA uridine(34) hydroxylase (322 aa).

In terms of domain architecture, Rhodanese spans Gln125–Glu219. The active-site Cysteine persulfide intermediate is Cys179.

The protein belongs to the TrhO family.

The catalysed reaction is uridine(34) in tRNA + AH2 + O2 = 5-hydroxyuridine(34) in tRNA + A + H2O. Functionally, catalyzes oxygen-dependent 5-hydroxyuridine (ho5U) modification at position 34 in tRNAs. This Bacillus licheniformis (strain ATCC 14580 / DSM 13 / JCM 2505 / CCUG 7422 / NBRC 12200 / NCIMB 9375 / NCTC 10341 / NRRL NRS-1264 / Gibson 46) protein is tRNA uridine(34) hydroxylase.